The following is a 303-amino-acid chain: Ribosomal protein L11 methyltransferase (303 aa).

S-adenosyl-L-methionine is bound by residues T152, G173, D195, and N239.

Belongs to the methyltransferase superfamily. PrmA family.

The protein resides in the cytoplasm. The catalysed reaction is L-lysyl-[protein] + 3 S-adenosyl-L-methionine = N(6),N(6),N(6)-trimethyl-L-lysyl-[protein] + 3 S-adenosyl-L-homocysteine + 3 H(+). Its function is as follows. Methylates ribosomal protein L11. This is Ribosomal protein L11 methyltransferase from Desulforapulum autotrophicum (strain ATCC 43914 / DSM 3382 / VKM B-1955 / HRM2) (Desulfobacterium autotrophicum).